Here is a 218-residue protein sequence, read N- to C-terminus: MTQDEMKKAAGWAALQYVEEGSIVGVGTGSTVNHFIDALGTMKDKIKGAVSSSIASTEKLEALEIKVFECNDVFKLDIYVDGADEINGSRDMIKGGGAALTREKIVAAISDKFICIVDGTKAVDVLGKFPLPVEVIPMARSYVARELVKLGGDPVYREGCTTDNGNVILDVYGMAIENPKQLEDIINGIAGVVTVGLFAHRGADVVITGTPEGAKIEE.

Substrate is bound by residues 28–31 (TGST), 81–84 (DGAD), and 94–97 (KGGG). Glu-103 (proton acceptor) is an active-site residue. Lys-121 provides a ligand contact to substrate.

Belongs to the ribose 5-phosphate isomerase family. In terms of assembly, homodimer.

It catalyses the reaction aldehydo-D-ribose 5-phosphate = D-ribulose 5-phosphate. It functions in the pathway carbohydrate degradation; pentose phosphate pathway; D-ribose 5-phosphate from D-ribulose 5-phosphate (non-oxidative stage): step 1/1. Functionally, catalyzes the reversible conversion of ribose-5-phosphate to ribulose 5-phosphate. The polypeptide is Ribose-5-phosphate isomerase A (Vibrio atlanticus (strain LGP32) (Vibrio splendidus (strain Mel32))).